A 256-amino-acid chain; its full sequence is Flap endonuclease Xni (256 aa).

D105 provides a ligand contact to Mg(2+). Residues 163–256 form the 5'-3' exonuclease domain; it reads RSQLIDYLAL…QFRIKKPDSE (94 aa). Residues L172, A173, P181, V183, and I186 each coordinate K(+). The interaction with DNA stretch occupies residues 185 to 190; sequence GIGPKS.

This sequence belongs to the Xni family. Mg(2+) serves as cofactor. Requires K(+) as cofactor.

Has flap endonuclease activity. During DNA replication, flap endonucleases cleave the 5'-overhanging flap structure that is generated by displacement synthesis when DNA polymerase encounters the 5'-end of a downstream Okazaki fragment. In Shewanella pealeana (strain ATCC 700345 / ANG-SQ1), this protein is Flap endonuclease Xni.